A 692-amino-acid polypeptide reads, in one-letter code: Elongation factor G 2 (692 aa).

The 276-residue stretch at 8-283 folds into the tr-type G domain; it reads EKTRNIGIMA…SVVAYLPSPL (276 aa). GTP contacts are provided by residues 17–24, 81–85, and 135–138; these read AHIDAGKT, DTPGH, and NKMD.

This sequence belongs to the TRAFAC class translation factor GTPase superfamily. Classic translation factor GTPase family. EF-G/EF-2 subfamily.

Its subcellular location is the cytoplasm. Functionally, catalyzes the GTP-dependent ribosomal translocation step during translation elongation. During this step, the ribosome changes from the pre-translocational (PRE) to the post-translocational (POST) state as the newly formed A-site-bound peptidyl-tRNA and P-site-bound deacylated tRNA move to the P and E sites, respectively. Catalyzes the coordinated movement of the two tRNA molecules, the mRNA and conformational changes in the ribosome. In Geobacter sulfurreducens (strain ATCC 51573 / DSM 12127 / PCA), this protein is Elongation factor G 2.